A 166-amino-acid polypeptide reads, in one-letter code: Interferon gamma (166 aa).

The first 23 residues, 1 to 23 (MNYTSYILAFQLCVILCSSGYYC), serve as a signal peptide directing secretion. At glutamine 24 the chain carries Pyrrolidone carboxylic acid. Residues asparagine 39 and asparagine 106 are each glycosylated (N-linked (GlcNAc...) asparagine).

Belongs to the type II (or gamma) interferon family. Homodimer. Interacts with IFNGR1 (via extracellular domain); this interaction promotes IFNGR1 dimerization. In terms of tissue distribution, released primarily from activated T lymphocytes.

Its subcellular location is the secreted. Type II interferon produced by immune cells such as T-cells and NK cells that plays crucial roles in antimicrobial, antiviral, and antitumor responses by activating effector immune cells and enhancing antigen presentation. Primarily signals through the JAK-STAT pathway after interaction with its receptor IFNGR1 to affect gene regulation. Upon IFNG binding, IFNGR1 intracellular domain opens out to allow association of downstream signaling components JAK2, JAK1 and STAT1, leading to STAT1 activation, nuclear translocation and transcription of IFNG-regulated genes. Many of the induced genes are transcription factors such as IRF1 that are able to further drive regulation of a next wave of transcription. Plays a role in class I antigen presentation pathway by inducing a replacement of catalytic proteasome subunits with immunoproteasome subunits. In turn, increases the quantity, quality, and repertoire of peptides for class I MHC loading. Increases the efficiency of peptide generation also by inducing the expression of activator PA28 that associates with the proteasome and alters its proteolytic cleavage preference. Up-regulates as well MHC II complexes on the cell surface by promoting expression of several key molecules such as cathepsins B/CTSB, H/CTSH, and L/CTSL. Participates in the regulation of hematopoietic stem cells during development and under homeostatic conditions by affecting their development, quiescence, and differentiation. This chain is Interferon gamma (IFNG), found in Ailuropoda melanoleuca (Giant panda).